The sequence spans 74 residues: Sec-independent protein translocase protein TatA (74 aa).

The helical transmembrane segment at 1–21 (MGGISIWQLLIIVAIVVLLFG) threads the bilayer. A disordered region spans residues 45–74 (EEPKDAEFKSLDKAENTAQTKKEEKEKEQA).

It belongs to the TatA/E family. As to quaternary structure, the Tat system comprises two distinct complexes: a TatABC complex, containing multiple copies of TatA, TatB and TatC subunits, and a separate TatA complex, containing only TatA subunits. Substrates initially bind to the TatABC complex, which probably triggers association of the separate TatA complex to form the active translocon.

The protein localises to the cell inner membrane. Its function is as follows. Part of the twin-arginine translocation (Tat) system that transports large folded proteins containing a characteristic twin-arginine motif in their signal peptide across membranes. TatA could form the protein-conducting channel of the Tat system. The polypeptide is Sec-independent protein translocase protein TatA (Actinobacillus succinogenes (strain ATCC 55618 / DSM 22257 / CCUG 43843 / 130Z)).